Reading from the N-terminus, the 250-residue chain is Kallikrein-14 (250 aa).

An N-terminal signal peptide occupies residues 1–18; the sequence is MFLLLIILQALAVAIAQS. The propeptide at 19–23 is activation peptide; it reads QGDHK. One can recognise a Peptidase S1 domain in the interval 24–248; the sequence is IIGGYRCVRN…YHSWIQRTMQ (225 aa). Residues cysteine 51 and cysteine 67 are joined by a disulfide bond. Active-site charge relay system residues include histidine 66 and aspartate 110. Disulfide bonds link cysteine 142–cysteine 209, cysteine 174–cysteine 188, and cysteine 199–cysteine 224. Residue serine 203 is the Charge relay system of the active site.

This sequence belongs to the peptidase S1 family. Kallikrein subfamily. Proteolytic cleavage of the activation peptide produces the active enzyme.

The protein localises to the secreted. It is found in the extracellular space. Inhibited by SERPINA1, SERPINC1, SERPINE1, SERPINF2, aprotinin, soybean, trypsin inhibitor and leupeptin. Inhibited by serine protease inhibitor SPINK5. Has an autoproteolytic activity which may have a regulatory effect. Activated by citrate and inhibited by zinc and to a lower extent by manganese. Serine-type endopeptidase with a dual trypsin-like and chymotrypsin-like substrate specificity. May activate/inactivate the proteinase-activated receptors F2R, F2RL1 and F2RL3 and other kallikreins including KLK1, KLK3, KLK5 and KLK11. May function in seminal clot liquefaction through direct cleavage of the semenogelin SEMG1 and SEMG2 and activation of KLK3. May function through desmoglein DSG1 cleavage in epidermal desquamation a process by which the most superficial corneocytes are shed from the skin surface. May be involved in several aspects of tumor progression including growth, invasion and angiogenesis. In Mus musculus (Mouse), this protein is Kallikrein-14 (Klk14).